A 300-amino-acid chain; its full sequence is Bifunctional protein FolD (300 aa).

NADP(+) is bound by residues 168–170 (GRS), serine 193, and isoleucine 234.

This sequence belongs to the tetrahydrofolate dehydrogenase/cyclohydrolase family. Homodimer.

The catalysed reaction is (6R)-5,10-methylene-5,6,7,8-tetrahydrofolate + NADP(+) = (6R)-5,10-methenyltetrahydrofolate + NADPH. It catalyses the reaction (6R)-5,10-methenyltetrahydrofolate + H2O = (6R)-10-formyltetrahydrofolate + H(+). It functions in the pathway one-carbon metabolism; tetrahydrofolate interconversion. Functionally, catalyzes the oxidation of 5,10-methylenetetrahydrofolate to 5,10-methenyltetrahydrofolate and then the hydrolysis of 5,10-methenyltetrahydrofolate to 10-formyltetrahydrofolate. The protein is Bifunctional protein FolD of Ehrlichia ruminantium (strain Gardel).